The chain runs to 1347 residues: Protocadherin-11 X-linked (1347 aa).

The N-terminal stretch at 1–23 (MDLLSGTYIFAVLLACVVFHSGA) is a signal peptide. The Extracellular segment spans residues 24–812 (QEKNYTIREE…VSSPTSDYVK (789 aa)). Cadherin domains are found at residues 26 to 139 (KNYT…APLF), 140 to 249 (PATV…HPVF), 250 to 355 (KETE…VPSI), 362 to 466 (NPVN…APVF), 467 to 570 (TQSF…SPVF), 571 to 673 (THNE…KPVF), and 677 to 795 (PSNY…APVT). N-linked (GlcNAc...) asparagine glycans are attached at residues Asn27, Asn48, and Asn54. Asn344 carries N-linked (GlcNAc...) asparagine glycosylation. N-linked (GlcNAc...) asparagine glycosylation is present at Asn553. A glycan (N-linked (GlcNAc...) asparagine) is linked at Asn773. The chain crosses the membrane as a helical span at residues 813–833 (ILVAAVAGTITVVVVIFITAV). Over 834 to 1347 (VRCRQAPHLK…DSPVMEEHPL (514 aa)) the chain is Cytoplasmic. Disordered regions lie at residues 1057–1091 (LPEG…GYPQ), 1097–1116 (RATP…ESTF), and 1325–1347 (TFTP…EHPL).

It is found in the cell membrane. Potential calcium-dependent cell-adhesion protein. This chain is Protocadherin-11 X-linked (PCDH11X), found in Pan troglodytes (Chimpanzee).